The sequence spans 144 residues: Transcriptional regulator SlyA (144 aa).

The HTH marR-type domain maps to 2-135 (ESPLGSDLAR…LNKIISKLEK (134 aa)). The H-T-H motif DNA-binding region spans 49-72 (QIQLAKAIGIEQPSLVRTLDQLEE).

This sequence belongs to the SlyA family. In terms of assembly, homodimer.

In terms of biological role, transcription regulator that can specifically activate or repress expression of target genes. This Blochmanniella pennsylvanica (strain BPEN) protein is Transcriptional regulator SlyA.